The sequence spans 341 residues: Probable electron transfer flavoprotein subunit alpha, mitochondrial (341 aa).

285-313 (LYIAVGIDGAIQHLAGIKDSKVIAAINRD) contacts FAD.

Belongs to the ETF alpha-subunit/FixB family. Heterodimer of an alpha and a beta subunit. Requires FAD as cofactor.

It localises to the mitochondrion matrix. Functionally, the electron transfer flavoprotein serves as a specific electron acceptor for several dehydrogenases, including five acyl-CoA dehydrogenases, glutaryl-CoA and sarcosine dehydrogenase. It transfers the electrons to the main mitochondrial respiratory chain via ETF-ubiquinone oxidoreductase (ETF dehydrogenase). In Schizosaccharomyces pombe (strain 972 / ATCC 24843) (Fission yeast), this protein is Probable electron transfer flavoprotein subunit alpha, mitochondrial.